A 103-amino-acid polypeptide reads, in one-letter code: Histone H4 (103 aa).

Gly residues predominate over residues 1 to 14 (MTGRGKGGKGLGKG). Positions 1-20 (MTGRGKGGKGLGKGGAKRHR) are disordered. Residues Lys6 and Lys13 each carry the N6-acetyl-N6-methyllysine; alternate modification. The DNA-binding element occupies 17–21 (KRHRK).

The protein belongs to the histone H4 family. In terms of assembly, the nucleosome is a histone octamer containing two molecules each of H2A, H2B, H3 and H4 assembled in one H3-H4 heterotetramer and two H2A-H2B heterodimers. The octamer wraps approximately 147 bp of DNA.

The protein localises to the nucleus. Its subcellular location is the chromosome. Functionally, core component of nucleosome. Nucleosomes wrap and compact DNA into chromatin, limiting DNA accessibility to the cellular machineries which require DNA as a template. Histones thereby play a central role in transcription regulation, DNA repair, DNA replication and chromosomal stability. DNA accessibility is regulated via a complex set of post-translational modifications of histones, also called histone code, and nucleosome remodeling. The chain is Histone H4 (His4) from Myrmica ruginodis (Red ant).